A 550-amino-acid polypeptide reads, in one-letter code: Acyl-CoA-dependent acyltransferase MAC2 (550 aa).

Belongs to the trichothecene O-acetyltransferase family.

The protein operates within secondary metabolite biosynthesis. In terms of biological role, acyl-CoA-dependent acyltransferase; part of the gene cluster that mediates the biosynthesis of mannosylerythritol lipids (MELs), surface-active substances that enhance the availability of water-insoluble substrates. Depending on the number of acetyl groups, mannosylerythritol lipids can be differentiated into MEL A (fully acetylated), MEL B and MEL C (monoacetylated at R-6 and R-4, respectively), and the fully deacetylated MEL D. The first step in the pathway is the generation of mannosylerythritol by the glycosyltransferase EMT1 which catalyzes the transfer of GDP-mannose to the C-4 atom of meso-erythritol. This reaction has to be stereospecific, since only mannosyl-D-erythritol is generated. The produced disaccharide is subsequently acylated with fatty acids of various lengths by the acyltransferases MAC1 and MAC2 at positions C-2 and C-3, repectively. The existence of MEL derivatives which carry an acetyl group at C-2 implies that at least MAC1 also accepts acetyl-CoA as a donor. The final step of MEL biosynthesis is the acetylation of the fully acylated mannosylerythritol lipids catalyzed by the acetyl-CoA-dependent acetyltransferase MAT1. MAT1 displays a relaxed regioselectivity and is able to transfer acetylgroups to both positions C-4 and C-6 of the mannosyl moiety. The chain is Acyl-CoA-dependent acyltransferase MAC2 from Pseudozyma antarctica (strain T-34) (Yeast).